Here is a 553-residue protein sequence, read N- to C-terminus: Methyl-coenzyme M reductase subunit alpha (553 aa).

Position 151 (glutamine 151) interacts with coenzyme F430. Coenzyme B contacts are provided by residues arginine 229, 260–261, and arginine 274; that span reads KH. Residues tyrosine 336 and tyrosine 447 each contribute to the coenzyme M site.

Belongs to the methyl-coenzyme M reductase alpha subunit family. MCR is a hexamer of two alpha, two beta, and two gamma chains, forming a dimer of heterotrimers. Coenzyme F430 is required as a cofactor.

It localises to the cytoplasm. It carries out the reaction coenzyme B + methyl-coenzyme M = methane + coenzyme M-coenzyme B heterodisulfide. The protein operates within one-carbon metabolism; methyl-coenzyme M reduction; methane from methyl-coenzyme M: step 1/1. Component of the methyl-coenzyme M reductase (MCR) I that catalyzes the reductive cleavage of methyl-coenzyme M (CoM-S-CH3 or 2-(methylthio)ethanesulfonate) using coenzyme B (CoB or 7-mercaptoheptanoylthreonine phosphate) as reductant which results in the production of methane and the mixed heterodisulfide of CoB and CoM (CoM-S-S-CoB). This is the final step in methanogenesis. The sequence is that of Methyl-coenzyme M reductase subunit alpha (mcrA) from Methanococcus vannielii.